Consider the following 103-residue polypeptide: Small ribosomal subunit protein uS10 (103 aa).

Belongs to the universal ribosomal protein uS10 family. As to quaternary structure, part of the 30S ribosomal subunit.

Functionally, involved in the binding of tRNA to the ribosomes. The sequence is that of Small ribosomal subunit protein uS10 from Thioalkalivibrio sulfidiphilus (strain HL-EbGR7).